The sequence spans 171 residues: UPF0312 protein SAR2769 (171 aa).

The protein belongs to the UPF0312 family.

This Staphylococcus aureus (strain MRSA252) protein is UPF0312 protein SAR2769.